The following is a 110-amino-acid chain: Large ribosomal subunit protein uL22 (110 aa).

The protein belongs to the universal ribosomal protein uL22 family. Part of the 50S ribosomal subunit.

This protein binds specifically to 23S rRNA; its binding is stimulated by other ribosomal proteins, e.g. L4, L17, and L20. It is important during the early stages of 50S assembly. It makes multiple contacts with different domains of the 23S rRNA in the assembled 50S subunit and ribosome. Its function is as follows. The globular domain of the protein is located near the polypeptide exit tunnel on the outside of the subunit, while an extended beta-hairpin is found that lines the wall of the exit tunnel in the center of the 70S ribosome. This chain is Large ribosomal subunit protein uL22, found in Marinobacter nauticus (strain ATCC 700491 / DSM 11845 / VT8) (Marinobacter aquaeolei).